Consider the following 318-residue polypeptide: Homoserine kinase (318 aa).

97–107 (PIGSGLGSSAC) lines the ATP pocket.

Belongs to the GHMP kinase family. Homoserine kinase subfamily.

Its subcellular location is the cytoplasm. The enzyme catalyses L-homoserine + ATP = O-phospho-L-homoserine + ADP + H(+). Its pathway is amino-acid biosynthesis; L-threonine biosynthesis; L-threonine from L-aspartate: step 4/5. In terms of biological role, catalyzes the ATP-dependent phosphorylation of L-homoserine to L-homoserine phosphate. The protein is Homoserine kinase of Vibrio atlanticus (strain LGP32) (Vibrio splendidus (strain Mel32)).